Consider the following 186-residue polypeptide: Alkyl hydroperoxide reductase AhpD (186 aa).

Cys-132 acts as the Proton donor in catalysis. An intrachain disulfide couples Cys-132 to Cys-135. Cys-135 acts as the Cysteine sulfenic acid (-SOH) intermediate in catalysis.

It belongs to the AhpD family.

The enzyme catalyses N(6)-[(R)-dihydrolipoyl]-L-lysyl-[lipoyl-carrier protein] + a hydroperoxide = N(6)-[(R)-lipoyl]-L-lysyl-[lipoyl-carrier protein] + an alcohol + H2O. In terms of biological role, antioxidant protein with alkyl hydroperoxidase activity. Required for the reduction of the AhpC active site cysteine residues and for the regeneration of the AhpC enzyme activity. This chain is Alkyl hydroperoxide reductase AhpD, found in Anaeromyxobacter sp. (strain K).